A 724-amino-acid chain; its full sequence is Phosphoribosylformylglycinamidine synthase subunit PurL (724 aa).

H46 is an active-site residue. ATP contacts are provided by Y49 and K88. E90 provides a ligand contact to Mg(2+). Substrate-binding positions include 91 to 94 (SHNH) and R113. H92 (proton acceptor) is an active-site residue. Residue D114 coordinates Mg(2+). Q237 provides a ligand contact to substrate. D265 contacts Mg(2+). 309-311 (ESQ) serves as a coordination point for substrate. Residues D489 and G526 each coordinate ATP. N527 lines the Mg(2+) pocket. S529 provides a ligand contact to substrate.

This sequence belongs to the FGAMS family. In terms of assembly, monomer. Part of the FGAM synthase complex composed of 1 PurL, 1 PurQ and 2 PurS subunits.

Its subcellular location is the cytoplasm. The catalysed reaction is N(2)-formyl-N(1)-(5-phospho-beta-D-ribosyl)glycinamide + L-glutamine + ATP + H2O = 2-formamido-N(1)-(5-O-phospho-beta-D-ribosyl)acetamidine + L-glutamate + ADP + phosphate + H(+). Its pathway is purine metabolism; IMP biosynthesis via de novo pathway; 5-amino-1-(5-phospho-D-ribosyl)imidazole from N(2)-formyl-N(1)-(5-phospho-D-ribosyl)glycinamide: step 1/2. In terms of biological role, part of the phosphoribosylformylglycinamidine synthase complex involved in the purines biosynthetic pathway. Catalyzes the ATP-dependent conversion of formylglycinamide ribonucleotide (FGAR) and glutamine to yield formylglycinamidine ribonucleotide (FGAM) and glutamate. The FGAM synthase complex is composed of three subunits. PurQ produces an ammonia molecule by converting glutamine to glutamate. PurL transfers the ammonia molecule to FGAR to form FGAM in an ATP-dependent manner. PurS interacts with PurQ and PurL and is thought to assist in the transfer of the ammonia molecule from PurQ to PurL. This Granulibacter bethesdensis (strain ATCC BAA-1260 / CGDNIH1) protein is Phosphoribosylformylglycinamidine synthase subunit PurL.